Consider the following 403-residue polypeptide: Phosphopentomutase (403 aa).

Residues Asp-13, Asp-298, His-303, Asp-339, His-340, and His-351 each contribute to the Mn(2+) site.

It belongs to the phosphopentomutase family. Requires Mn(2+) as cofactor.

It localises to the cytoplasm. It catalyses the reaction 2-deoxy-alpha-D-ribose 1-phosphate = 2-deoxy-D-ribose 5-phosphate. The catalysed reaction is alpha-D-ribose 1-phosphate = D-ribose 5-phosphate. The protein operates within carbohydrate degradation; 2-deoxy-D-ribose 1-phosphate degradation; D-glyceraldehyde 3-phosphate and acetaldehyde from 2-deoxy-alpha-D-ribose 1-phosphate: step 1/2. Isomerase that catalyzes the conversion of deoxy-ribose 1-phosphate (dRib-1-P) and ribose 1-phosphate (Rib-1-P) to deoxy-ribose 5-phosphate (dRib-5-P) and ribose 5-phosphate (Rib-5-P), respectively. This Streptococcus pyogenes serotype M28 (strain MGAS6180) protein is Phosphopentomutase.